We begin with the raw amino-acid sequence, 302 residues long: Pentatricopeptide repeat-containing protein At4g38150 (302 aa).

Polar residues predominate over residues 26–40 (SATRFLSTGDNGQVD). Disordered stretches follow at residues 26–82 (SATR…TTLS) and 94–116 (VNQDSRETPKPEQYPQEPLPPPE). A compositionally biased stretch (basic and acidic residues) spans 54–67 (LRGERSSNSHREPP). PPR repeat units follow at residues 130 to 164 (LIPNAVAMLDGLCKDGLVQEAMKLFGLMRDKGTIP), 165 to 199 (EVVIYTAVVEAFCKAHKIEDAKRIFRKMQNNGIAP), 200 to 234 (NAFSYGVLVQGLYNCNMLDDAVAFCSEMLESGHSP), and 235 to 269 (NVPTFVELVDALCRVKGVEQAQSAIDTLNQKGFAV).

The protein belongs to the PPR family. P subfamily.

The polypeptide is Pentatricopeptide repeat-containing protein At4g38150 (Arabidopsis thaliana (Mouse-ear cress)).